The primary structure comprises 645 residues: Putative palmitoyltransferase ZDHHC13 (645 aa).

The segment at 1–73 is disordered; the sequence is MDWSEGDGSH…KSSHPEDSSS (73 aa). Over 1-314 the chain is Cytoplasmic; that stretch reads MDWSEGDGSH…ACLKLLNRYK (314 aa). The span at 7 to 20 shows a compositional bias: basic and acidic residues; sequence DGSHSHGHMGDSCH. Positions 23–33 are enriched in basic residues; the sequence is GGGHSHGHGHS. Residues 34–43 show a composition bias toward gly residues; that stretch reads HGGSGFGGFM. ANK repeat units follow at residues 104 to 133, 138 to 167, 171 to 200, 204 to 234, and 239 to 268; these read ENVT…VIDQ, LNST…DPSL, EGYR…EVDL, NGQT…SVNA, and NRNS…SVDM. Residues 315-335 form a helical membrane-spanning segment; that stretch reads VCLQSVFSVVVVGAFGAILDM. A topological domain (lumenal) is located at residue Arg-336. Residues 337–357 form a helical membrane-spanning segment; the sequence is TESWLLKGILLACIMAVINLA. The Cytoplasmic portion of the chain corresponds to 358-369; the sequence is SRQLATVAVRSL. A helical transmembrane segment spans residues 370–390; that stretch reads IPSTGLIASVFWMVVTWVLWF. Residues 391–394 are Lumenal-facing; it reads LPDE. Residues 395–415 traverse the membrane as a helical segment; the sequence is PSAAVQMLFTVNITAVLYYYI. Over 416 to 492 the chain is Cytoplasmic; the sequence is RSCRTDPGHV…NGCIGARNHP (77 aa). A DHHC domain is found at 449 to 499; that stretch reads IFCTSCMMRKPMRANHCFSCNACVAKQDHHSIWINGCIGARNHPFFVLFLV. The helical transmembrane segment at 493-513 threads the bilayer; the sequence is FFVLFLVALNFLCIWMFYGSI. Topologically, residues 514–542 are lumenal; the sequence is TYWSRHCPLHYSEEGIWGALTALMGCSPW. A helical membrane pass occupies residues 543 to 563; the sequence is LLYVFCFVFFHTTWASILLVL. The Cytoplasmic portion of the chain corresponds to 564-645; that stretch reads QLYQIAFLGL…RDMFSSPDAV (82 aa).

Belongs to the DHHC palmitoyltransferase family. AKR/ZDHHC17 subfamily.

The protein localises to the golgi apparatus membrane. Its subcellular location is the cytoplasmic vesicle membrane. Functionally, putative palmitoyltransferase that could catalyze the addition of palmitate onto various protein substrates. The chain is Putative palmitoyltransferase ZDHHC13 from Danio rerio (Zebrafish).